Reading from the N-terminus, the 545-residue chain is Thermosome subunit (545 aa).

Belongs to the TCP-1 chaperonin family. Forms an oligomeric complex of eight-membered rings.

Functionally, molecular chaperone; binds unfolded polypeptides in vitro, and has a weak ATPase activity. The chain is Thermosome subunit (ths) from Desulfurococcus sp. (strain SY).